Consider the following 270-residue polypeptide: Putative phosphoenolpyruvate synthase regulatory protein (270 aa).

Residue 149–156 (GVSRSGKT) coordinates ADP.

The protein belongs to the pyruvate, phosphate/water dikinase regulatory protein family. PSRP subfamily.

The catalysed reaction is [pyruvate, water dikinase] + ADP = [pyruvate, water dikinase]-phosphate + AMP + H(+). It catalyses the reaction [pyruvate, water dikinase]-phosphate + phosphate + H(+) = [pyruvate, water dikinase] + diphosphate. Functionally, bifunctional serine/threonine kinase and phosphorylase involved in the regulation of the phosphoenolpyruvate synthase (PEPS) by catalyzing its phosphorylation/dephosphorylation. The polypeptide is Putative phosphoenolpyruvate synthase regulatory protein (Pseudoalteromonas atlantica (strain T6c / ATCC BAA-1087)).